The following is a 397-amino-acid chain: Izumo sperm-egg fusion protein 1 (397 aa).

An N-terminal signal peptide occupies residues Met1–Pro21. 5 disulfide bridges follow: Cys22–Cys149, Cys25–Cys152, Cys135–Cys159, Cys139–Cys165, and Cys182–Cys233. The Extracellular portion of the chain corresponds to Cys22–Arg319. The important for interaction with IZUMO1R stretch occupies residues Trp148–Arg160. Residues Glu167–Thr251 enclose the Ig-like C2-type domain. The N-linked (GlcNAc...) asparagine glycan is linked to Asn204. Residues Glu271–Leu292 are disordered. Residues Leu320–Leu340 traverse the membrane as a helical segment. At His341–Asn397 the chain is on the cytoplasmic side. The disordered stretch occupies residues Asn351–Asn397. The span at Ala360–Met373 shows a compositional bias: polar residues. Position 379 is a phosphoserine (Ser379). The segment covering Ser388–Asn397 has biased composition (basic and acidic residues).

Belongs to the Izumo family. As to quaternary structure, monomer, homodimer; disulfide-linked and homooligomer; depending on the context. Interacts with IZUMO1R/JUNO. IZUMO1 and IZUMO1R/JUNO form a complex with 1:1 stoichiometry. In gamete recognition, IZUMO1R/JUNO first binds to monomeric IZUMO1. The weak, but specific interaction with IZUMO1R/JUNO induces IZUMO1 homodimerization. The process follows a tight binding phase where IZUMO1 bends the entire structure towards the sperm membrane side through a thiol-disulfide exchange reaction. The molecule no longer binds to IZUMO1R/JUNO and instead binds to a putative second oocyte receptor. Interacts with ACE3. Part of a oolemmal binding multimeric complex (IZUMO1 complex) composed at least of IZUMO1 and GLIPR1L1; the complex assemblage is influenced by the maturation status of the male germ cell. Interacts with GLIPR1L1. Interacts with FREY; the interaction retains IZUMO1 at the endoplasmic reticulum membrane and coordinates IZUMO1 complex assembly. Interacts with WDR54. Forms a complex with SPACA6 and TMEM81 on spermatocyte cell membrane. In terms of processing, N-glycosylated. Glycosylation is not essential for fusion and for proper protein trafficking in sperm. Phosphorylated. The cytoplasmic C-terminus is phosphorylated and undergoes phosphorylation changes during epididymal transit. In terms of tissue distribution, sperm-specific (at protein level). Detectable on sperm surface only after the acrosome reaction. Expressed in spermatozoa, more abundantly expressed in the head than the tail (at protein level).

The protein resides in the cell membrane. Its subcellular location is the cytoplasmic vesicle. It localises to the secretory vesicle. The protein localises to the acrosome membrane. Functionally, essential sperm cell-surface protein required for fertilization by acting as a ligand for IZUMO1R/JUNO receptor on egg. The IZUMO1:IZUMO1R/JUNO interaction is a necessary adhesion event between sperm and egg that is required for fertilization but is not sufficient for cell fusion. The ligand-receptor interaction probably does not act as a membrane 'fusogen'. Plays a critical role in sperm-oolemma binding prior to plasma membrane fusion. Can mediate cell-cell fusion in cultured mammalian cells independently of its binding to IZUMO1R/JUNO. In Mus musculus (Mouse), this protein is Izumo sperm-egg fusion protein 1.